Here is a 145-residue protein sequence, read N- to C-terminus: Transcriptional regulator MraZ (145 aa).

SpoVT-AbrB domains follow at residues 5–50 (TFNH…ALPQ) and 81–124 (AHEV…DRAA).

The protein belongs to the MraZ family. In terms of assembly, forms oligomers.

Its subcellular location is the cytoplasm. The protein localises to the nucleoid. In Anaeromyxobacter dehalogenans (strain 2CP-1 / ATCC BAA-258), this protein is Transcriptional regulator MraZ.